Consider the following 858-residue polypeptide: GDP-fucose protein O-fucosyltransferase 2 (858 aa).

Over 1–150 (MHCQLGGQAR…RPPCLLNHRR (150 aa)) the chain is Cytoplasmic. A helical; Signal-anchor for type II membrane protein transmembrane segment spans residues 151–171 (LLLGLVSVLTVFLSCLPFTNA). Over 172-858 (TVSPAALQDV…WPSLDPSSTL (687 aa)) the chain is Lumenal. 237–241 (GEGFH) provides a ligand contact to GDP-beta-L-fucose. Glutamate 238 serves as the catalytic Proton acceptor. Residues 448–510 (AALTPQERQR…SRSRKEIQEE (63 aa)) are disordered. Positions 486–510 (DGEREKRKPGRRSDTSRSRKEIQEE) are enriched in basic and acidic residues. GDP-beta-L-fucose-binding positions include 646-648 (HLR) and 787-788 (RF). Residues 819 to 858 (TGGQAQGKCFATKSHDPPEGRSRSELRRKYWPSLDPSSTL) form a disordered region. The span at 831 to 846 (KSHDPPEGRSRSELRR) shows a compositional bias: basic and acidic residues.

It belongs to the glycosyltransferase 68 family.

It localises to the endoplasmic reticulum membrane. It catalyses the reaction L-seryl-[protein] + GDP-beta-L-fucose = 3-O-(alpha-L-fucosyl)-L-seryl-[protein] + GDP + H(+). It carries out the reaction L-threonyl-[protein] + GDP-beta-L-fucose = 3-O-(alpha-L-fucosyl)-L-threonyl-[protein] + GDP + H(+). The protein operates within protein modification; protein glycosylation. Catalyzes the reaction that attaches fucose through an O-glycosidic linkage to a conserved serine or threonine residue in the consensus sequence C1-X-X-S/T-C2 of thrombospondin type I repeats (TSRs) where C1 and C2 are the first and second cysteines of the repeat, respectively. O-fucosylates microneme protein MIC2 and may play a role in its stabilization. Probably by regulating protein O-fucosylation, may play a role in tachyzoite adhesion to and/or invasion of host cells; however, POFUT2 involvement in adhesion/invasion is controversial. This Toxoplasma gondii (strain ATCC 50853 / GT1) protein is GDP-fucose protein O-fucosyltransferase 2.